The primary structure comprises 60 residues: Large ribosomal subunit protein bL32 (60 aa).

The interval methionine 1–threonine 43 is disordered. Over residues arginine 7–arginine 16 the composition is skewed to basic residues.

This sequence belongs to the bacterial ribosomal protein bL32 family.

In Saccharophagus degradans (strain 2-40 / ATCC 43961 / DSM 17024), this protein is Large ribosomal subunit protein bL32.